Consider the following 93-residue polypeptide: Large ribosomal subunit protein uL23cz/uL23cy (93 aa).

Belongs to the universal ribosomal protein uL23 family. Part of the 50S ribosomal subunit.

The protein localises to the plastid. Its subcellular location is the chloroplast. Its function is as follows. Binds to 23S rRNA. This is Large ribosomal subunit protein uL23cz/uL23cy (rpl23-A) from Helianthus annuus (Common sunflower).